The following is a 142-amino-acid chain: Large ribosomal subunit protein uL13 (142 aa).

Belongs to the universal ribosomal protein uL13 family. As to quaternary structure, part of the 50S ribosomal subunit.

Functionally, this protein is one of the early assembly proteins of the 50S ribosomal subunit, although it is not seen to bind rRNA by itself. It is important during the early stages of 50S assembly. The polypeptide is Large ribosomal subunit protein uL13 (Citrifermentans bemidjiense (strain ATCC BAA-1014 / DSM 16622 / JCM 12645 / Bem) (Geobacter bemidjiensis)).